The sequence spans 309 residues: Homoserine O-acetyltransferase (309 aa).

Residue cysteine 142 is the Acyl-thioester intermediate of the active site. Residues lysine 163 and serine 192 each contribute to the substrate site. The active-site Proton acceptor is the histidine 235. The active site involves glutamate 237. Arginine 249 serves as a coordination point for substrate.

It belongs to the MetA family.

The protein resides in the cytoplasm. It carries out the reaction L-homoserine + acetyl-CoA = O-acetyl-L-homoserine + CoA. The protein operates within amino-acid biosynthesis; L-methionine biosynthesis via de novo pathway; O-acetyl-L-homoserine from L-homoserine: step 1/1. Transfers an acetyl group from acetyl-CoA to L-homoserine, forming acetyl-L-homoserine. This chain is Homoserine O-acetyltransferase, found in Allorhizobium ampelinum (strain ATCC BAA-846 / DSM 112012 / S4) (Agrobacterium vitis (strain S4)).